We begin with the raw amino-acid sequence, 185 residues long: uncharacterized protein (185 aa).

Transmembrane regions (helical) follow at residues 1–21 and 111–131; these read MMKFLLILIFLASFSFSLTPE and FLWIITGIFTTLTASVIAFAW.

To A.aeolicus aq_1900.

It localises to the cell membrane. This is an uncharacterized protein from Aquifex aeolicus (strain VF5).